Here is a 931-residue protein sequence, read N- to C-terminus: Isoleucine--tRNA ligase (931 aa).

Positions 57 to 67 (PFANGNIHMGH) match the 'HIGH' region motif. Residue E556 participates in L-isoleucyl-5'-AMP binding. Residues 597–601 (KMSKS) carry the 'KMSKS' region motif. An ATP-binding site is contributed by K600. 4 residues coordinate Zn(2+): C890, C893, C910, and C913.

It belongs to the class-I aminoacyl-tRNA synthetase family. IleS type 1 subfamily. Monomer. The cofactor is Zn(2+).

Its subcellular location is the cytoplasm. The enzyme catalyses tRNA(Ile) + L-isoleucine + ATP = L-isoleucyl-tRNA(Ile) + AMP + diphosphate. In terms of biological role, catalyzes the attachment of isoleucine to tRNA(Ile). As IleRS can inadvertently accommodate and process structurally similar amino acids such as valine, to avoid such errors it has two additional distinct tRNA(Ile)-dependent editing activities. One activity is designated as 'pretransfer' editing and involves the hydrolysis of activated Val-AMP. The other activity is designated 'posttransfer' editing and involves deacylation of mischarged Val-tRNA(Ile). The sequence is that of Isoleucine--tRNA ligase from Lactobacillus delbrueckii subsp. bulgaricus (strain ATCC 11842 / DSM 20081 / BCRC 10696 / JCM 1002 / NBRC 13953 / NCIMB 11778 / NCTC 12712 / WDCM 00102 / Lb 14).